Here is a 968-residue protein sequence, read N- to C-terminus: RNA polymerase-associated protein RapA (968 aa).

One can recognise a Helicase ATP-binding domain in the interval 164–334 (EVGQRHAPRV…FARLRLLDPD (171 aa)). ATP is bound at residue 177–184 (DEVGLGKT). Positions 280–283 (DEAH) match the DEAH box motif. Residues 490–664 (RVEWLLNYLI…ATPSEQEGLD (175 aa)) form the Helicase C-terminal domain.

Belongs to the SNF2/RAD54 helicase family. RapA subfamily. As to quaternary structure, interacts with the RNAP. Has a higher affinity for the core RNAP than for the holoenzyme. Its ATPase activity is stimulated by binding to RNAP.

Its function is as follows. Transcription regulator that activates transcription by stimulating RNA polymerase (RNAP) recycling in case of stress conditions such as supercoiled DNA or high salt concentrations. Probably acts by releasing the RNAP, when it is trapped or immobilized on tightly supercoiled DNA. Does not activate transcription on linear DNA. Probably not involved in DNA repair. In Yersinia enterocolitica serotype O:8 / biotype 1B (strain NCTC 13174 / 8081), this protein is RNA polymerase-associated protein RapA.